Consider the following 334-residue polypeptide: tRNA N6-adenosine threonylcarbamoyltransferase (334 aa).

His-111 and His-115 together coordinate Fe cation. Residues 134–138, Asp-167, Gly-180, Asp-184, and Asn-272 contribute to the substrate site; that span reads IVSGG. Asp-300 is a Fe cation binding site.

Belongs to the KAE1 / TsaD family. It depends on Fe(2+) as a cofactor.

Its subcellular location is the cytoplasm. The catalysed reaction is L-threonylcarbamoyladenylate + adenosine(37) in tRNA = N(6)-L-threonylcarbamoyladenosine(37) in tRNA + AMP + H(+). In terms of biological role, required for the formation of a threonylcarbamoyl group on adenosine at position 37 (t(6)A37) in tRNAs that read codons beginning with adenine. Is involved in the transfer of the threonylcarbamoyl moiety of threonylcarbamoyl-AMP (TC-AMP) to the N6 group of A37, together with TsaE and TsaB. TsaD likely plays a direct catalytic role in this reaction. This is tRNA N6-adenosine threonylcarbamoyltransferase from Dictyoglomus turgidum (strain DSM 6724 / Z-1310).